A 185-amino-acid polypeptide reads, in one-letter code: UPF0301 protein HCH_00550 (185 aa).

The protein belongs to the UPF0301 (AlgH) family.

This is UPF0301 protein HCH_00550 from Hahella chejuensis (strain KCTC 2396).